Consider the following 284-residue polypeptide: Nucleotide-binding protein NMA0948 (284 aa).

8 to 15 (GLSGSGKS) is an ATP binding site. 58–61 (DVRS) is a binding site for GTP.

It belongs to the RapZ-like family.

Displays ATPase and GTPase activities. This is Nucleotide-binding protein NMA0948 from Neisseria meningitidis serogroup A / serotype 4A (strain DSM 15465 / Z2491).